The primary structure comprises 358 residues: Alanine racemase (358 aa).

Lys-35 acts as the Proton acceptor; specific for D-alanine in catalysis. Lys-35 bears the N6-(pyridoxal phosphate)lysine mark. Arg-131 contacts substrate. Tyr-253 acts as the Proton acceptor; specific for L-alanine in catalysis. Met-301 serves as a coordination point for substrate.

It belongs to the alanine racemase family. It depends on pyridoxal 5'-phosphate as a cofactor.

It catalyses the reaction L-alanine = D-alanine. It functions in the pathway amino-acid biosynthesis; D-alanine biosynthesis; D-alanine from L-alanine: step 1/1. Catalyzes the interconversion of L-alanine and D-alanine. May also act on other amino acids. This Alteromonas mediterranea (strain DSM 17117 / CIP 110805 / LMG 28347 / Deep ecotype) protein is Alanine racemase (alr).